The sequence spans 993 residues: Desmoglein-3 (993 aa).

The first 23 residues, 1–23 (MTWLLFRTSGALAILMVLILVHG), serve as a signal peptide directing secretion. The propeptide occupies 24-48 (ELRIETKGQHGEDETAIQGRRRYKR). Cadherin domains follow at residues 48–156 (REWV…APVF), 157–266 (SQSI…FPMF), 267–386 (KESQ…HPAS), and 383–494 (HPAS…CPTV). Residues 49-617 (EWVKFAKPCR…GKRPSGRLGS (569 aa)) are Extracellular-facing. 2 N-linked (GlcNAc...) asparagine glycosylation sites follow: Asn-109 and Asn-179. 2 N-linked (GlcNAc...) asparagine glycosylation sites follow: Asn-458 and Asn-544. The helical transmembrane segment at 618–638 (AAIGLLLLGLLLLLLAPLLLL) threads the bilayer. Topologically, residues 639-993 (TCDYGVGPIG…CTEDPCSRLI (355 aa)) are cytoplasmic. The segment at 641–713 (DYGVGPIGGV…NTYAGGTVVE (73 aa)) is required for interaction with CTNND1 and localization at cell-cell junctions. Desmoglein repeat repeat units lie at residues 903-929 (LSASSSVLQSATSIPNPVQHGSYMVTE) and 930-960 (TYSASGSLVQPTTTVLEPLLTQNVTVTERVI).

In terms of assembly, homodimer. Part of a complex that contains DSG3, PKP1, YAP1 and YWHAG; the complex is required for localization of DSG3 and YAP1 to the cell membrane in keratinocytes. Interacts with PKP2. Interacts with CTNND1; the interaction facilitates DSG3 localization and retention at cell-cell junctions. Interacts with CDH1; the interaction is required for CDH1 localization to developing adherens junctions. Interacts with RAC1; the interaction is required for DSG3 translocation to cell-cell junctions, organization of cortical F-actin bundles and actin anchoring at cell-cell junctions. Interacts with DSC3; the interaction may limit the interaction of DSC3 with p38MAPK family members and therefore repress p38MAPK signaling activation.

It localises to the cell membrane. It is found in the cell junction. The protein localises to the desmosome. Its subcellular location is the cytoplasm. The protein resides in the tight junction. A component of desmosome cell-cell junctions which are required for positive regulation of cellular adhesion. Required for adherens and desmosome junction assembly in response to mechanical force in keratinocytes. Required for desmosome-mediated cell-cell adhesion of cells surrounding the telogen hair club and the basal layer of the outer root sheath epithelium, consequently is essential for the anchoring of telogen hairs in the hair follicle. Required for the maintenance of the epithelial barrier via promoting desmosome-mediated intercellular attachment of suprabasal epithelium to basal cells. May play a role in the protein stability of the desmosome plaque components DSP, JUP, PKP1, PKP2 and PKP3. Required for YAP1 localization at the plasma membrane in keratinocytes in response to mechanical strain, via the formation of an interaction complex composed of DSG3, PKP1 and YWHAG. May also be involved in the positive regulation of YAP1 target gene transcription and as a result cell proliferation. Positively regulates cellular contractility and cell junction formation via organization of cortical F-actin bundles and anchoring of actin to tight junctions, in conjunction with RAC1. The cytoplasmic pool of DSG3 is required for the localization of CDH1 and CTNNB1 at developing adherens junctions, potentially via modulation of SRC activity. Inhibits keratinocyte migration via suppression of p38MAPK signaling, may therefore play a role in moderating wound healing. The polypeptide is Desmoglein-3 (DSG3) (Canis lupus familiaris (Dog)).